The chain runs to 188 residues: Elongation factor P (188 aa).

The protein belongs to the elongation factor P family.

Its subcellular location is the cytoplasm. It functions in the pathway protein biosynthesis; polypeptide chain elongation. In terms of biological role, involved in peptide bond synthesis. Stimulates efficient translation and peptide-bond synthesis on native or reconstituted 70S ribosomes in vitro. Probably functions indirectly by altering the affinity of the ribosome for aminoacyl-tRNA, thus increasing their reactivity as acceptors for peptidyl transferase. This Phocaeicola vulgatus (strain ATCC 8482 / DSM 1447 / JCM 5826 / CCUG 4940 / NBRC 14291 / NCTC 11154) (Bacteroides vulgatus) protein is Elongation factor P.